Consider the following 200-residue polypeptide: Claudin-11 (200 aa).

Residue Met1 is a topological domain, cytoplasmic. Residues 2–22 (VATCLQVVGFVTSFVGWIGVI) traverse the membrane as a helical segment. Residues 23-75 (VTTSTNDWVVTCGYTIPTCRKLDELGSKGLWADCVMATGLYHCKPLVDILPCR) lie on the Extracellular side of the membrane. A helical transmembrane segment spans residues 76-96 (ALMIAASVLGLPAILLLLTVL). Residues 97-115 (PCIRMGQEPGVAKYRRAQL) lie on the Cytoplasmic side of the membrane. A helical membrane pass occupies residues 116–136 (AGVLLILLALCAIVATIWFPV). At 137–150 (CAHRETTIVSFGYS) the chain is on the extracellular side. A helical transmembrane segment spans residues 151-171 (LYAGWIGAVLCLVGGCVILCC). At 172–200 (AGDAQAFGENRFYYTAGSSSPTHAKSAHV) the chain is on the cytoplasmic side. 2 positions are modified to phosphoserine: Ser190 and Ser191.

Belongs to the claudin family. Interacts with tetraspanin-3/TSPAN3. Interacts with OCLN.

It localises to the cell junction. The protein localises to the tight junction. It is found in the cell membrane. Functionally, plays a major role in tight junction-specific obliteration of the intercellular space, through calcium-independent cell-adhesion activity. The protein is Claudin-11 (CLDN11) of Pongo abelii (Sumatran orangutan).